The chain runs to 1721 residues: Ras guanine nucleotide exchange factor R (1721 aa).

Positions 148–279 form a coiled coil; it reads QLEDEVDLVH…LQQQQQQQRS (132 aa). 6 disordered regions span residues 213–232, 445–515, 551–701, 716–766, 797–837, and 929–981; these read QQQKHQEEKEKNDQKEKEEK, SSLG…NQQP, ATTT…VDKQ, RTPL…KSPS, TITI…TPNK, and DEVS…DPVS. Residues 216–232 are compositionally biased toward basic and acidic residues; it reads KHQEEKEKNDQKEKEEK. Composition is skewed to low complexity over residues 454–469, 479–493, 501–515, and 551–581; these read SPEKSISPSFTSSTSE, HNNNNNNYNNSSTNN, PSLSSNHSQQPNQQP, and ATTTTTTATSPSTSTSTSTSTSPNSSSLSIS. Positions 618–627 are enriched in polar residues; that stretch reads NGTTSPRNNE. 2 stretches are compositionally biased toward low complexity: residues 628–651 and 663–686; these read SSVTAATTTTTSTTASITTNVNTI and TPTTGTPSTSTPTPQTPTSTSQND. Positions 687 to 701 are enriched in basic and acidic residues; that stretch reads KQNENNNKENFVDKQ. 3 stretches are compositionally biased toward low complexity: residues 724-748, 797-836, and 933-952; these read SSNSSSPSNNSNTTNSSSHSSTNSS, TITINNNNNNNNNNNNNNNNNNNNIQQQQQQQQQIPTTPN, and ESSSSSSSSTTSPNNINTPS. A coiled-coil region spans residues 802 to 831; it reads NNNNNNNNNNNNNNNNNNNIQQQQQQQQQI. The span at 968 to 978 shows a compositional bias: polar residues; that stretch reads NLSSINNSSYD. The 121-residue stretch at 1291–1411 folds into the N-terminal Ras-GEF domain; it reads GRYVPKAGTL…ILGGLIKKKE (121 aa). Residues 1447 to 1676 enclose the Ras-GEF domain; it reads NESEIARQLT…YQLSLIREPR (230 aa).

Post-translationally, phosphorylated on threonine residues.

Its function is as follows. Promotes the exchange of Ras-bound GDP by GTP. May also play a role in the activation of rasG. The protein is Ras guanine nucleotide exchange factor R (gefR) of Dictyostelium discoideum (Social amoeba).